Reading from the N-terminus, the 62-residue chain is uncharacterized protein (62 aa).

It localises to the plastid. The protein localises to the chloroplast. This is an uncharacterized protein from Guillardia theta (Cryptophyte).